A 199-amino-acid chain; its full sequence is Recombination protein RecR (199 aa).

A C4-type zinc finger spans residues 58–73; that stretch reads CRICYNITDTEVCNIC. The Toprim domain maps to 81–176; sequence SLICVVSHPM…KVTRIAHGVP (96 aa).

Belongs to the RecR family.

May play a role in DNA repair. It seems to be involved in an RecBC-independent recombinational process of DNA repair. It may act with RecF and RecO. This is Recombination protein RecR from Thermoanaerobacter sp. (strain X514).